Reading from the N-terminus, the 1150-residue chain is RNA polymerase-associated protein CTR9 (1150 aa).

TPR repeat units lie at residues 143-176, 177-210, 212-245, 247-282, 320-353, 355-388, 432-464, 471-504, 594-627, 643-677, 679-711, 712-745, and 748-781; these read VRAW…NPKN, VLPL…CRHT, ADLR…EPYN, SAMC…QTDH, AEAF…NNGE, TLAH…LPNN, YEAC…LVTN, PEML…LEEQ, PIVW…IFNN, FEQL…QPKN, YAAN…TSEF, YDVW…FRKE, and STLQ…QLDN. Coiled coils occupy residues 848–916 and 972–1028; these read AEEA…NLRL and ERRE…AKQS. The interval 935 to 1150 is disordered; sequence KRRGGGGRKR…KKKVIESDSD (216 aa). Residues 975–992 show a composition bias toward basic residues; the sequence is ERRKKDKAAKKASRKKRE. Basic and acidic residues-rich tracts occupy residues 993-1005, 1013-1024, 1060-1084, and 1132-1150; these read RRDS…NRRD, EERDRKLQEKLS, DPRP…ETTT, and RDSD…SDSD.

As to quaternary structure, component of the PAF1 complex which consists of at least cdc-73, ctr-9, leo-1, pafo-1 and rtfo-1.

It localises to the nucleus. Functionally, component of the PAF1 complex which is a multifunctional complex involved in transcription initiation via genetic interactions with TATA-binding proteins, elongation and transcription-coupled histone modification. Ctr-9 is required for epidermal microtubule organization during morphogenesis. The sequence is that of RNA polymerase-associated protein CTR9 from Caenorhabditis elegans.